A 257-amino-acid chain; its full sequence is Snake venom serine protease 2C (257 aa).

The first 18 residues, 1–18 (MVLIRVLANLLILQLSYA), serve as a signal peptide directing secretion. A propeptide spanning residues 19-24 (QKSSEL) is cleaved from the precursor. The Peptidase S1 domain maps to 25-248 (VIGGHPCNIN…HLDWIKSIIA (224 aa)). Disulfide bonds link C31-C162, C49-C65, C97-C255, C141-C209, C173-C188, and C199-C224. Catalysis depends on charge relay system residues H64 and D109. N-linked (GlcNAc...) asparagine glycosylation is found at N116, N120, and N121. Catalysis depends on S203, which acts as the Charge relay system.

It belongs to the peptidase S1 family. Snake venom subfamily. Monomer. In terms of tissue distribution, expressed by the venom gland.

The protein localises to the secreted. In terms of biological role, snake venom serine protease that may act in the hemostasis system of the prey. This Craspedocephalus gramineus (Bamboo pit viper) protein is Snake venom serine protease 2C (TLG2C).